Here is a 250-residue protein sequence, read N- to C-terminus: Probable transcriptional regulatory protein Cag_0165 (250 aa).

The protein belongs to the TACO1 family.

The protein localises to the cytoplasm. The polypeptide is Probable transcriptional regulatory protein Cag_0165 (Chlorobium chlorochromatii (strain CaD3)).